Reading from the N-terminus, the 140-residue chain is Nucleoside diphosphate kinase (140 aa).

Residues Lys-11, Phe-59, Arg-87, Thr-93, Arg-104, and Asn-114 each coordinate ATP. His-117 serves as the catalytic Pros-phosphohistidine intermediate.

It belongs to the NDK family. Homotetramer. Mg(2+) is required as a cofactor.

Its subcellular location is the cytoplasm. It catalyses the reaction a 2'-deoxyribonucleoside 5'-diphosphate + ATP = a 2'-deoxyribonucleoside 5'-triphosphate + ADP. The enzyme catalyses a ribonucleoside 5'-diphosphate + ATP = a ribonucleoside 5'-triphosphate + ADP. Its function is as follows. Major role in the synthesis of nucleoside triphosphates other than ATP. The ATP gamma phosphate is transferred to the NDP beta phosphate via a ping-pong mechanism, using a phosphorylated active-site intermediate. The polypeptide is Nucleoside diphosphate kinase (Novosphingobium aromaticivorans (strain ATCC 700278 / DSM 12444 / CCUG 56034 / CIP 105152 / NBRC 16084 / F199)).